A 510-amino-acid polypeptide reads, in one-letter code: Cytochrome P450 monooxygenase AFLA_114810 (510 aa).

A signal peptide spans 1–17 (MLILLGLLCLYTGLYVA). Cys-444 is a heme binding site.

It belongs to the cytochrome P450 family. The cofactor is heme.

It participates in secondary metabolite biosynthesis. In terms of biological role, cytochrome P450 monooxygenase; part of the gene cluster 41 that mediates the biosynthesis of an extracellular and diffusible metabolite that is able to stimulate colony sclerotial production. The polypeptide is Cytochrome P450 monooxygenase AFLA_114810 (Aspergillus flavus (strain ATCC 200026 / FGSC A1120 / IAM 13836 / NRRL 3357 / JCM 12722 / SRRC 167)).